An 824-amino-acid polypeptide reads, in one-letter code: Glycerol-3-phosphate acyltransferase (824 aa).

The short motif at 302–307 (CHRSHM) is the HXXXXD motif element.

This sequence belongs to the GPAT/DAPAT family.

It localises to the cell inner membrane. It carries out the reaction sn-glycerol 3-phosphate + an acyl-CoA = a 1-acyl-sn-glycero-3-phosphate + CoA. It functions in the pathway phospholipid metabolism; CDP-diacylglycerol biosynthesis; CDP-diacylglycerol from sn-glycerol 3-phosphate: step 1/3. This Actinobacillus pleuropneumoniae serotype 3 (strain JL03) protein is Glycerol-3-phosphate acyltransferase.